A 431-amino-acid chain; its full sequence is PHD finger-containing protein 1 (431 aa).

The PHD-type zinc finger occupies 7–59 (GPVCQTCGDIGFEEALVFCDSCMFESIHRYCLGITPIPFTEYITWICEDCDNS). Zn(2+)-binding residues include cysteine 10, cysteine 13, cysteine 25, cysteine 28, histidine 34, cysteine 37, cysteine 53, and cysteine 56. A disordered region spans residues 125–221 (EAADSSSVPD…QESSDSRKPH (97 aa)). Positions 128–139 (DSSSVPDHSSCT) are enriched in polar residues. A compositionally biased stretch (basic residues) spans 160–171 (KKKKKKKKKKSI). A compositionally biased stretch (low complexity) spans 191–202 (VVEPVEVSSSSP). The segment covering 205-221 (ETMESKRQESSDSRKPH) has biased composition (basic and acidic residues).

Interacts directly with AIPP3/BDT1.

Its function is as follows. Together with AIPP3/BDT1, cooperates to form a BAH-PHD bivalent histone reader complex able to read histone H3 lysine 27 trimethylation (H3K27me3) histone marks in order to regulate transcription, especially to prevent early flowering; promotes AIPP3/BDT1 binding to H3K27me3. In Arabidopsis thaliana (Mouse-ear cress), this protein is PHD finger-containing protein 1.